Reading from the N-terminus, the 25-residue chain is Spinigerin (25 aa).

The protein resides in the secreted. Active against Gram-positive bacteria B.megaterium and M.luteus, Gram-negative bacteria E.coli SBS363 and D22, K.pneumoniae, S.typhimurium and P.aeruginosa, yeast C.albicans and filamentous fungi F.culmorum, N.crassa, N.hematococca and T.viridae. Inactive against Gram-positive bacteria B.subtilis, S.pyogenes, B.thuringiensis and S.aureus, Gram-negative bacteria E.cloacae and E.carotovora and filamentous fungus B.bassiana. The protein is Spinigerin of Pseudacanthotermes spiniger.